A 392-amino-acid chain; its full sequence is Bone morphogenetic protein 15 (392 aa).

An N-terminal signal peptide occupies residues 1 to 18 (MVLLSILRILFLCELVLF). A propeptide spanning residues 19–267 (MEHRAQMAEG…ERESLLRRTR (249 aa)) is cleaved from the precursor. N-linked (GlcNAc...) asparagine glycosylation is found at N87, N147, and N237. Q268 carries the pyrrolidone carboxylic acid; in P16 and P17 modification. S273 carries the phosphoserine; in P16 modification. T277 carries O-linked (HexNAc...) threonine; in P17 glycosylation. Disulfide bonds link C291/C357, C320/C389, and C324/C391. A glycan (N-linked (GlcNAc...) asparagine) is linked at N373.

Belongs to the TGF-beta family. As to quaternary structure, homodimer. But, in contrast to other members of this family, cannot be disulfide-linked.

It is found in the secreted. Its function is as follows. May be involved in follicular development. Oocyte-specific growth/differentiation factor that stimulates folliculogenesis and granulosa cell (GC) growth. The protein is Bone morphogenetic protein 15 (BMP15) of Homo sapiens (Human).